A 959-amino-acid polypeptide reads, in one-letter code: Leucine--tRNA ligase (959 aa).

The short motif at 39-49 is the 'HIGH' region element; that stretch reads PYVNAYPHLGS. The short motif at 637–641 is the 'KMSKS' region element; that stretch reads KMSKS. An ATP-binding site is contributed by lysine 640. The tract at residues 933–959 is disordered; sequence TEEDGGSPRRANALPGRPALYAEKRGG.

Belongs to the class-I aminoacyl-tRNA synthetase family.

It localises to the cytoplasm. It catalyses the reaction tRNA(Leu) + L-leucine + ATP = L-leucyl-tRNA(Leu) + AMP + diphosphate. The chain is Leucine--tRNA ligase from Aeropyrum pernix (strain ATCC 700893 / DSM 11879 / JCM 9820 / NBRC 100138 / K1).